Consider the following 341-residue polypeptide: Protein arginine N-methyltransferase 1 (341 aa).

Residues 20–315 (ADYYFDSYSH…DCAPFDKNQR (296 aa)) enclose the SAM-dependent MTase PRMT-type domain. Positions 33, 42, 66, 88, and 117 each coordinate S-adenosyl-L-methionine. Residues glutamate 132 and glutamate 141 contribute to the active site.

The protein belongs to the class I-like SAM-binding methyltransferase superfamily. Protein arginine N-methyltransferase family.

It localises to the nucleus. It is found in the cytoplasm. The protein resides in the cytosol. The enzyme catalyses L-arginyl-[protein] + 2 S-adenosyl-L-methionine = N(omega),N(omega)-dimethyl-L-arginyl-[protein] + 2 S-adenosyl-L-homocysteine + 2 H(+). It catalyses the reaction L-arginyl-[protein] + S-adenosyl-L-methionine = N(omega)-methyl-L-arginyl-[protein] + S-adenosyl-L-homocysteine + H(+). In terms of biological role, arginine methyltransferase that methylates the guanidino nitrogens of arginyl residues present in proteins such as ribonucleoproteins and histones. In Dictyostelium discoideum (Social amoeba), this protein is Protein arginine N-methyltransferase 1 (prmt1).